We begin with the raw amino-acid sequence, 231 residues long: Putative N-acetylmannosamine-6-phosphate 2-epimerase (231 aa).

This sequence belongs to the NanE family.

It catalyses the reaction an N-acyl-D-glucosamine 6-phosphate = an N-acyl-D-mannosamine 6-phosphate. The protein operates within amino-sugar metabolism; N-acetylneuraminate degradation; D-fructose 6-phosphate from N-acetylneuraminate: step 3/5. Functionally, converts N-acetylmannosamine-6-phosphate (ManNAc-6-P) to N-acetylglucosamine-6-phosphate (GlcNAc-6-P). This chain is Putative N-acetylmannosamine-6-phosphate 2-epimerase, found in Listeria monocytogenes serotype 4b (strain CLIP80459).